The primary structure comprises 238 residues: MGHRITTQNRGRGGPTYRAPSHRYKAALKHIGDGTKSISGSIIDIEHDPARNAPIALVQLEDGSKVYILVTEGIGIGETVAWGADVKVKNGNTLPLQSIPTGSYICNIESRPNDGGKFVRSTGVQAVVVDKIGDRIGVRMPSGKTKWFNARCRATVGIVAGGGRVEKPFVKAGNKSHKMRNTASNWPRVRGVAMNVIDHPFGGGGHQHPGRPKTIARGTSPGRTVGHVAARQTGRSRK.

The tract at residues 201–238 (FGGGGHQHPGRPKTIARGTSPGRTVGHVAARQTGRSRK) is disordered.

This sequence belongs to the universal ribosomal protein uL2 family. Part of the 50S ribosomal subunit. Forms a bridge to the 30S subunit in the 70S ribosome.

Functionally, one of the primary rRNA binding proteins. Required for association of the 30S and 50S subunits to form the 70S ribosome, for tRNA binding and peptide bond formation. It has been suggested to have peptidyltransferase activity; this is somewhat controversial. Makes several contacts with the 16S rRNA in the 70S ribosome. The sequence is that of Large ribosomal subunit protein uL2 from Methanoregula boonei (strain DSM 21154 / JCM 14090 / 6A8).